An 87-amino-acid chain; its full sequence is uncharacterized protein (87 aa).

The first 23 residues, 1 to 23 (MAVSVLRLTVVLGLLVLFLTCYA), serve as a signal peptide directing secretion. The interval 24-44 (DDKPDKPDDKPDDSGKDPKPD) is disordered.

Its subcellular location is the secreted. This is an uncharacterized protein from Homo sapiens (Human).